A 59-amino-acid chain; its full sequence is Large ribosomal subunit protein bL32 (59 aa).

This sequence belongs to the bacterial ribosomal protein bL32 family.

The sequence is that of Large ribosomal subunit protein bL32 from Synechococcus sp. (strain JA-2-3B'a(2-13)) (Cyanobacteria bacterium Yellowstone B-Prime).